A 515-amino-acid polypeptide reads, in one-letter code: Glucose-6-phosphate 1-dehydrogenase (515 aa).

A2 carries the post-translational modification N-acetylalanine. S8 carries the post-translational modification Phosphoserine. Phosphothreonine is present on T10. Residues 38-45 (GASGDLAK) and R72 each bind NADP(+). N6-acetyllysine is present on K89. NADP(+) contacts are provided by Y147 and K171. Residues K171, 201 to 205 (HYLGK), E239, and D258 each bind D-glucose 6-phosphate. N6-(2-hydroxyisobutyryl)lysine; alternate is present on K171. K171 bears the N6-acetyllysine; alternate mark. The active-site Proton acceptor is the H263. R357 contacts NADP(+). K360 and R365 together coordinate D-glucose 6-phosphate. Residues K366, R370, and R393 each coordinate NADP(+). Q395 provides a ligand contact to D-glucose 6-phosphate. Residues 401–403 (YTK) and 421–423 (DLT) each bind NADP(+). The residue at position 403 (K403) is an N6-acetyllysine. K432 is subject to N6-acetyllysine. An NADP(+)-binding site is contributed by R487. N6-acetyllysine is present on K497. 2 residues coordinate NADP(+): Y503 and W509. The residue at position 503 (Y503) is a Phosphotyrosine.

The protein belongs to the glucose-6-phosphate dehydrogenase family. In terms of assembly, homotetramer; dimer of dimers. Interacts with SIRT2; the interaction is enhanced by H(2)O(2) treatment. Forms a ternary complex with ALDOB and TP53; this interaction is direct. ALDOB stabilizes the complex inhibiting G6PD activity and keeping oxidative pentose phosphate metabolism in check. In terms of processing, acetylated by ELP3 at Lys-403; acetylation inhibits its homodimerization and enzyme activity. Deacetylated by SIRT2 at Lys-403; deacetylation stimulates its enzyme activity.

It localises to the cytoplasm. Its subcellular location is the cytosol. The protein localises to the membrane. It catalyses the reaction D-glucose 6-phosphate + NADP(+) = 6-phospho-D-glucono-1,5-lactone + NADPH + H(+). The protein operates within carbohydrate degradation; pentose phosphate pathway; D-ribulose 5-phosphate from D-glucose 6-phosphate (oxidative stage): step 1/3. In terms of biological role, cytosolic glucose-6-phosphate dehydrogenase that catalyzes the first and rate-limiting step of the oxidative branch within the pentose phosphate pathway/shunt, an alternative route to glycolysis for the dissimilation of carbohydrates and a major source of reducing power and metabolic intermediates for fatty acid and nucleic acid biosynthetic processes. The protein is Glucose-6-phosphate 1-dehydrogenase (G6PD) of Osphranter robustus (Wallaroo).